We begin with the raw amino-acid sequence, 138 residues long: Ribosome-binding factor A (138 aa).

The disordered stretch occupies residues 117 to 138; the sequence is ERQNKPAASTEKPPVGSLDADL.

The protein belongs to the RbfA family. Monomer. Binds 30S ribosomal subunits, but not 50S ribosomal subunits or 70S ribosomes.

It localises to the cytoplasm. Functionally, one of several proteins that assist in the late maturation steps of the functional core of the 30S ribosomal subunit. Associates with free 30S ribosomal subunits (but not with 30S subunits that are part of 70S ribosomes or polysomes). Required for efficient processing of 16S rRNA. May interact with the 5'-terminal helix region of 16S rRNA. The polypeptide is Ribosome-binding factor A (Acaryochloris marina (strain MBIC 11017)).